The following is a 1077-amino-acid chain: Semaphorin-5A (1077 aa).

The signal sequence occupies residues 1–21 (MKGACILAWLFSSLGVWRLAR). Topologically, residues 22-971 (PETQDPAKCQ…RCGEFNMFHM (950 aa)) are extracellular. The Sema domain occupies 35 to 484 (HPVVSYKEIG…LQEHVAKIPL (450 aa)). 2 disulfides stabilise this stretch: cysteine 104-cysteine 114 and cysteine 131-cysteine 140. Residues asparagine 147, asparagine 168, asparagine 227, and asparagine 277 are each glycosylated (N-linked (GlcNAc...) asparagine). Disulfide bonds link cysteine 254–cysteine 357 and cysteine 278–cysteine 320. N-linked (GlcNAc...) asparagine glycosylation is found at asparagine 323 and asparagine 367. Intrachain disulfides connect cysteine 487-cysteine 504 and cysteine 496-cysteine 513. 2 N-linked (GlcNAc...) asparagine glycosylation sites follow: asparagine 536 and asparagine 591. TSP type-1 domains follow at residues 540-593 (DGSF…TNCS), 595-651 (NGGW…LLCP), 653-702 (HVFW…NACP), 707-765 (TTPW…GCST), 784-839 (NGAW…LPCP), 841-896 (DGVW…QTCP), and 897-944 (ESWS…VFDS). 6 disulfide bridges follow: cysteine 607-cysteine 644, cysteine 611-cysteine 650, cysteine 622-cysteine 634, cysteine 665-cysteine 696, cysteine 669-cysteine 701, and cysteine 680-cysteine 686. N-linked (GlcNAc...) asparagine glycosylation is present at asparagine 717. 6 disulfide bridges follow: cysteine 796-cysteine 833, cysteine 800-cysteine 838, cysteine 811-cysteine 823, cysteine 853-cysteine 890, cysteine 857-cysteine 895, and cysteine 868-cysteine 880. Asparagine 933 carries an N-linked (GlcNAc...) asparagine glycan. A helical transmembrane segment spans residues 972 to 992 (FHMMAVGLSSSILGCLLTLLV). Residues 993 to 1077 (YTYCQRYQQQ…FTDLNNYDEY (85 aa)) are Cytoplasmic-facing.

It belongs to the semaphorin family. As to quaternary structure, binds PLXNB3. As to expression, in adult, detected in liver, brain, kidney, heart, lung and spleen.

It localises to the membrane. Its function is as follows. Bifunctional axonal guidance cue regulated by sulfated proteoglycans; attractive effects result from interactions with heparan sulfate proteoglycans (HSPGs), while the inhibitory effects depend on interactions with chondroitin sulfate proteoglycans (CSPGs). Ligand for receptor PLXNB3. In glioma cells, SEMA5A stimulation of PLXNB3 results in the disassembly of F-actin stress fibers, disruption of focal adhesions and cellular collapse as well as inhibition of cell migration and invasion through ARHGDIA-mediated inactivation of RAC1. May promote angiogenesis by increasing endothelial cell proliferation and migration and inhibiting apoptosis. The protein is Semaphorin-5A (Sema5a) of Mus musculus (Mouse).